Consider the following 76-residue polypeptide: Protein RALF-like 30 (76 aa).

The N-terminal stretch at 1–22 is a signal peptide; the sequence is MKAWVICLMVISIFMMIEPTLA. Cystine bridges form between Cys37–Cys46 and Cys66–Cys72.

This sequence belongs to the plant rapid alkalinization factor (RALF) family.

It localises to the secreted. Functionally, cell signaling peptide that may regulate plant stress, growth, and development. Mediates a rapid alkalinization of extracellular space by mediating a transient increase in the cytoplasmic Ca(2+) concentration leading to a calcium-dependent signaling events through a cell surface receptor and a concomitant activation of some intracellular mitogen-activated protein kinases. The chain is Protein RALF-like 30 (RALFL30) from Arabidopsis thaliana (Mouse-ear cress).